A 425-amino-acid chain; its full sequence is MDKLVINGGHRLTGSVAASGSKNSALPLIAATLLCDNGTCRLERIPDLKDTRTFQELLAYLGADISYSGSRLSVSTQNLRAIQAPYELVKKMRASIYVLGPLLARFGRAEVSLPGGCAFGPRPIDLHLMAMEKLGASISIKNGYIEASIAKGRLTGGHIEFPVSSVGATGNALMAASLAEGTTTITNASIEPEITALCDFLMAMGADIKGAGTTALTIEGVPSLHPVAFTNIFDRIEAGTLLAAAAITKGTISITGIDHTHMGAVLKKFKQAGCRITIDDDSLTLQSPDRLEPTDIIASPYPFFPTDMQAQWIALMTQANGSSRIIDKVYHERFNHIPELNRLGAKIEINNNEAIVHGPQLLTGTTVMSTDLRASACLVLAGLVAQGTTEVLRVYHLDRGYEKIEEKLRHLGADIQRENYQEFST.

Residue 22–23 (KN) participates in phosphoenolpyruvate binding. Residue Arg-93 participates in UDP-N-acetyl-alpha-D-glucosamine binding. Cys-117 serves as the catalytic Proton donor. Position 117 is a 2-(S-cysteinyl)pyruvic acid O-phosphothioketal (Cys-117). Residues 122-126 (RPIDL), Asp-307, and Val-329 contribute to the UDP-N-acetyl-alpha-D-glucosamine site.

Belongs to the EPSP synthase family. MurA subfamily.

The protein resides in the cytoplasm. It carries out the reaction phosphoenolpyruvate + UDP-N-acetyl-alpha-D-glucosamine = UDP-N-acetyl-3-O-(1-carboxyvinyl)-alpha-D-glucosamine + phosphate. It functions in the pathway cell wall biogenesis; peptidoglycan biosynthesis. In terms of biological role, cell wall formation. Adds enolpyruvyl to UDP-N-acetylglucosamine. This is UDP-N-acetylglucosamine 1-carboxyvinyltransferase from Prosthecochloris aestuarii (strain DSM 271 / SK 413).